The chain runs to 231 residues: Ribonuclease HII (231 aa).

Residues Trp32–Glu223 form the RNase H type-2 domain. The a divalent metal cation site is built by Asp38, Glu39, and Asp130.

Belongs to the RNase HII family. It depends on Mn(2+) as a cofactor. Mg(2+) serves as cofactor.

It is found in the cytoplasm. It catalyses the reaction Endonucleolytic cleavage to 5'-phosphomonoester.. Functionally, endonuclease that specifically degrades the RNA of RNA-DNA hybrids. The sequence is that of Ribonuclease HII from Mesorhizobium japonicum (strain LMG 29417 / CECT 9101 / MAFF 303099) (Mesorhizobium loti (strain MAFF 303099)).